The following is a 418-amino-acid chain: Tyrosine--tRNA ligase (418 aa).

Residue Tyr34 participates in L-tyrosine binding. The 'HIGH' region signature appears at 39-48 (PTADSLHLGH). Positions 169 and 173 each coordinate L-tyrosine. Residues 229–233 (KFGKS) carry the 'KMSKS' region motif. Lys232 contacts ATP. The region spanning 352–418 (NNIVELLVSS…GKKKYFVLTY (67 aa)) is the S4 RNA-binding domain.

The protein belongs to the class-I aminoacyl-tRNA synthetase family. TyrS type 1 subfamily. Homodimer.

The protein resides in the cytoplasm. It carries out the reaction tRNA(Tyr) + L-tyrosine + ATP = L-tyrosyl-tRNA(Tyr) + AMP + diphosphate + H(+). Catalyzes the attachment of tyrosine to tRNA(Tyr) in a two-step reaction: tyrosine is first activated by ATP to form Tyr-AMP and then transferred to the acceptor end of tRNA(Tyr). This Streptococcus pneumoniae (strain ATCC BAA-255 / R6) protein is Tyrosine--tRNA ligase.